The sequence spans 338 residues: Nicotinate-nucleotide--dimethylbenzimidazole phosphoribosyltransferase (338 aa).

Glu-305 (proton acceptor) is an active-site residue.

It belongs to the CobT family.

The catalysed reaction is 5,6-dimethylbenzimidazole + nicotinate beta-D-ribonucleotide = alpha-ribazole 5'-phosphate + nicotinate + H(+). It functions in the pathway nucleoside biosynthesis; alpha-ribazole biosynthesis; alpha-ribazole from 5,6-dimethylbenzimidazole: step 1/2. Catalyzes the synthesis of alpha-ribazole-5'-phosphate from nicotinate mononucleotide (NAMN) and 5,6-dimethylbenzimidazole (DMB). This Sinorhizobium medicae (strain WSM419) (Ensifer medicae) protein is Nicotinate-nucleotide--dimethylbenzimidazole phosphoribosyltransferase.